Reading from the N-terminus, the 353-residue chain is MAPTRHWVTPLLLLCCSGICGAIQWLGLTVNGSRVAWNESEHCRLLDGLVPDQSQLCKRNLELMQSVVNAAKQTKLTCQMTLSDMRWNCSSVENAPSFTPDLSKGTRESAFVYALASATLSHTIARACASGELPTCSCGATPAEVPGTGFRWGGCGDNLHYGLNMGSAFVDAPMKSSKSAGTQATKIMNLHNNAVGRQVLMDSLETKCKCHGVSGSCSVKTCWKGLQDLPHIANELKSKYLGATKVIHRQTGTRRQLVPRELDIRPVRESELVYLVSSPDYCTKNPKLGSYGTQDRLCNKTSVGSDSCNLMCCGRGYNAYTETIVERCQCKYHWCCYVMCKKCERTVERYVCK.

Positions methionine 1–alanine 22 are cleaved as a signal peptide. N-linked (GlcNAc...) asparagine glycosylation is found at asparagine 31, asparagine 38, and asparagine 88. 5 disulfides stabilise this stretch: cysteine 78–cysteine 89, cysteine 128–cysteine 136, cysteine 138–cysteine 155, cysteine 208–cysteine 222, and cysteine 210–cysteine 217. Serine 214 carries O-palmitoleoyl serine; by PORCN lipidation. A sulfotyrosine mark is found at tyrosine 274 and tyrosine 281. Intrachain disulfides connect cysteine 282–cysteine 313, cysteine 298–cysteine 308, cysteine 312–cysteine 352, cysteine 328–cysteine 343, cysteine 330–cysteine 340, and cysteine 335–cysteine 336. The N-linked (GlcNAc...) asparagine glycan is linked to asparagine 299.

It belongs to the Wnt family. As to quaternary structure, homodimer. Secreted homodimers form a complex with wnt5a homodimers; tyrosine sulfation of both wnt11 and wnt5a by tpst1 is required for this interaction. Interacts with the transmembrane receptor fzd7/fz7. Interacts with lrp6 and ryk. Interacts with tdgf1/frl1. Interacts weakly with frzb1 and strongly with frzb2/crescent. Interaction with frzb2/crescent antagonizes wnt11 function in the neuroectoderm, but enhances it in mesodermal tissue. Post-translationally, glycosylation is required for protein secretion. Palmitoleoylation is required for efficient binding to frizzled receptors. Depalmitoleoylation leads to Wnt signaling pathway inhibition. Transcripts are expressed ubiquitously in early oocytes but become vegetally localized during mid-oogenesis then enriched on the dorsal side by the 8 to 16 cell stage. The protein becomes asymmetrically concentrated on the dorsal side by the 64-cell stage. During gastrulation, expressed in the lateral and ventral marginal zone, and during tadpole stages in the somites and first branchial arch. Weakly expressed in the pronephros from at least stage 12.5, with kidney expression increasing until stage 35. Expressed in the prospective posterior gut between stages 13 and 20, and in the deep foregut endoderm. Prior to neural crest cell migration, expressed in a domain flanking the neural crest on the lateral or epidermal side (the opposite side to wnt11/wnt11-r).

The protein localises to the secreted. Its subcellular location is the extracellular space. It is found in the extracellular matrix. Its function is as follows. Ligand for the frizzled7 transmembrane receptor. Primarily acts via non-canonical Wnt pathways mediated by either Ca(2+) and PKC, or by JNK and dvl2/dsh. Depending on the cellular context, can also signal via the canonical Wnt pathway mediated by beta-catenin and dvl2/dsh. May also inhibit canonical Wnt signaling. Maternally initiates dorsal/ventral axis formation by a canonical route, which signals via lrp6. In a complex with wnt5a, activates the canonical and non-canonical processes involved in axis formation. In the non-canonical pathway, acts through fzd7/fz7 to induce phosphorylation of dvl2/dsh. Signals through a non-canonical Wnt pathway to regulate convergent extension movements during gastrulation. Interactions with the secreted Wnt antagonist sfrp5 to coordinate foregut development, acting via a non-canonical Wnt pathway whereby sfrp5 restricts wnt11b activity to prevent inappropriate foregut formation. Mediates cardiogenesis via non-canonical Wnt signaling involving JNK-activation and PKC. Acts redundantly with wnt11/wnt11r during pronephros induction. This chain is Protein Wnt-11b (wnt11b), found in Xenopus laevis (African clawed frog).